Consider the following 126-residue polypeptide: Large ribosomal subunit protein bL19 (126 aa).

This sequence belongs to the bacterial ribosomal protein bL19 family.

This protein is located at the 30S-50S ribosomal subunit interface and may play a role in the structure and function of the aminoacyl-tRNA binding site. In Bordetella bronchiseptica (strain ATCC BAA-588 / NCTC 13252 / RB50) (Alcaligenes bronchisepticus), this protein is Large ribosomal subunit protein bL19.